An 82-amino-acid chain; its full sequence is Metallothionein-like protein 2A (82 aa).

The protein belongs to the metallothionein superfamily. Type 15 family. In terms of tissue distribution, expressed in stems, leaves, rachis, inflorescences and seeds.

Metallothioneins have a high content of cysteine residues that bind various heavy metals. The chain is Metallothionein-like protein 2A (MT2A) from Oryza sativa subsp. japonica (Rice).